The following is a 284-amino-acid chain: Formamidopyrimidine-DNA glycosylase (284 aa).

Pro-2 serves as the catalytic Schiff-base intermediate with DNA. Glu-3 (proton donor) is an active-site residue. Lys-59 functions as the Proton donor; for beta-elimination activity in the catalytic mechanism. The DNA site is built by His-94 and Arg-113. The FPG-type zinc-finger motif lies at 239 to 273 (KVHTKKDQPCSVCNQLIVKKKINGRGSYFCLNCQK). Arg-263 acts as the Proton donor; for delta-elimination activity in catalysis.

The protein belongs to the FPG family. Monomer. Zn(2+) is required as a cofactor.

The enzyme catalyses Hydrolysis of DNA containing ring-opened 7-methylguanine residues, releasing 2,6-diamino-4-hydroxy-5-(N-methyl)formamidopyrimidine.. The catalysed reaction is 2'-deoxyribonucleotide-(2'-deoxyribose 5'-phosphate)-2'-deoxyribonucleotide-DNA = a 3'-end 2'-deoxyribonucleotide-(2,3-dehydro-2,3-deoxyribose 5'-phosphate)-DNA + a 5'-end 5'-phospho-2'-deoxyribonucleoside-DNA + H(+). Involved in base excision repair of DNA damaged by oxidation or by mutagenic agents. Acts as a DNA glycosylase that recognizes and removes damaged bases. Has a preference for oxidized purines, such as 7,8-dihydro-8-oxoguanine (8-oxoG). Has AP (apurinic/apyrimidinic) lyase activity and introduces nicks in the DNA strand. Cleaves the DNA backbone by beta-delta elimination to generate a single-strand break at the site of the removed base with both 3'- and 5'-phosphates. This chain is Formamidopyrimidine-DNA glycosylase (mutM), found in Mycoplasma genitalium (strain ATCC 33530 / DSM 19775 / NCTC 10195 / G37) (Mycoplasmoides genitalium).